Consider the following 281-residue polypeptide: Protein-S-isoprenylcysteine O-methyltransferase (281 aa).

Topologically, residues 1-2 (ML) are cytoplasmic. Residues 3–29 (SPAGKISLQSFTGSSLVFFVICMFNHY) form a helical membrane-spanning segment. At 30 to 35 (YGITNL) the chain is on the lumenal side. A helical transmembrane segment spans residues 36-53 (VVNTLIVFFYAVNVYFFL). At 54–58 (KFFYN) the chain is on the cytoplasmic side. Residues 59–85 (EFAFAIAIRAAFLGLVLVLGLYIKLVA) form a helical membrane-spanning segment. The Lumenal portion of the chain corresponds to 86–88 (PPN). The chain crosses the membrane as a helical span at residues 89–113 (IQIFGGYMSVMALFHYSEFLAIAIV). Residues 114–118 (QPKQV) lie on the Cytoplasmic side of the membrane. A helical transmembrane segment spans residues 119-149 (STDSFVINHSPQYTIAAVSSWVEFFIETYFF). Over 150 to 155 (PGLKEI) the chain is Lumenal. The helical transmembrane segment at 156–181 (HWLSNIGLCVCILGEVLRKTAILTAG) threads the bilayer. Residues 182-208 (SNFNHLVQCEKSSDHVLVTHGVYAWFR) are Cytoplasmic-facing. S-adenosyl-L-methionine contacts are provided by residues glutamine 189, 196–199 (HVLV), tyrosine 204, and 209–212 (HPSY). The chain crosses the membrane as a helical span at residues 209–226 (HPSYVGWFYWSIGTQIIL). The Lumenal segment spans residues 227 to 229 (INP). A helical transmembrane segment spans residues 230-243 (LCIPAYTLASWMFF). The Cytoplasmic portion of the chain corresponds to 244–281 (KERIYIEESMLLSFFGQQYCDYQQQVGTGIPFIEGYKI). Arginine 246 is a binding site for substrate. Glutamate 250 contacts S-adenosyl-L-methionine.

Belongs to the class VI-like SAM-binding methyltransferase superfamily. Isoprenylcysteine carboxyl methyltransferase family.

It localises to the endoplasmic reticulum membrane. It carries out the reaction [protein]-C-terminal S-[(2E,6E)-farnesyl]-L-cysteine + S-adenosyl-L-methionine = [protein]-C-terminal S-[(2E,6E)-farnesyl]-L-cysteine methyl ester + S-adenosyl-L-homocysteine. In terms of biological role, catalyzes the post-translational methylation of isoprenylated C-terminal cysteine residues. The sequence is that of Protein-S-isoprenylcysteine O-methyltransferase from Tribolium castaneum (Red flour beetle).